The sequence spans 194 residues: Thymidine kinase (194 aa).

ATP contacts are provided by residues 15 to 22 and 89 to 92; these read GPMFSGKS and DEAH. E90 serves as the catalytic Proton acceptor. C146, C149, C178, and C181 together coordinate Zn(2+).

It belongs to the thymidine kinase family. In terms of assembly, homotetramer.

The protein localises to the cytoplasm. The catalysed reaction is thymidine + ATP = dTMP + ADP + H(+). The polypeptide is Thymidine kinase (Metamycoplasma arthritidis (strain 158L3-1) (Mycoplasma arthritidis)).